We begin with the raw amino-acid sequence, 276 residues long: NAD-capped RNA hydrolase NudC (276 aa).

Position 82 (R82) interacts with substrate. 2 residues coordinate Zn(2+): C112 and C115. Residue E125 coordinates substrate. Residues C130 and C133 each coordinate Zn(2+). Y138 serves as a coordination point for substrate. The 124-residue stretch at P139–Y262 folds into the Nudix hydrolase domain. A172, E188, and E192 together coordinate a divalent metal cation. The short motif at G173–S194 is the Nudix box element. A substrate-binding site is contributed by Q206–S213. E233 lines the a divalent metal cation pocket. A255 is a substrate binding site.

This sequence belongs to the Nudix hydrolase family. NudC subfamily. In terms of assembly, homodimer. Requires Mg(2+) as cofactor. It depends on Mn(2+) as a cofactor. Zn(2+) serves as cofactor.

The enzyme catalyses a 5'-end NAD(+)-phospho-ribonucleoside in mRNA + H2O = a 5'-end phospho-adenosine-phospho-ribonucleoside in mRNA + beta-nicotinamide D-ribonucleotide + 2 H(+). It carries out the reaction NAD(+) + H2O = beta-nicotinamide D-ribonucleotide + AMP + 2 H(+). It catalyses the reaction NADH + H2O = reduced beta-nicotinamide D-ribonucleotide + AMP + 2 H(+). Its function is as follows. mRNA decapping enzyme that specifically removes the nicotinamide adenine dinucleotide (NAD) cap from a subset of mRNAs by hydrolyzing the diphosphate linkage to produce nicotinamide mononucleotide (NMN) and 5' monophosphate mRNA. The NAD-cap is present at the 5'-end of some mRNAs and stabilizes RNA against 5'-processing. Has preference for mRNAs with a 5'-end purine. Catalyzes the hydrolysis of a broad range of dinucleotide pyrophosphates. This Pseudomonas fluorescens (strain ATCC BAA-477 / NRRL B-23932 / Pf-5) protein is NAD-capped RNA hydrolase NudC.